The sequence spans 427 residues: Glutamyl-tRNA reductase (427 aa).

Substrate-binding positions include 49-52, Ser101, 106-108, and Gln112; these read TCNR and EPQ. Cys50 acts as the Nucleophile in catalysis. Residue 181 to 186 coordinates NADP(+); that stretch reads GAGETI. A disordered region spans residues 407–427; it reads FPATPGYRHPPVRPDDADPAP. Basic and acidic residues predominate over residues 418 to 427; sequence VRPDDADPAP.

The protein belongs to the glutamyl-tRNA reductase family. In terms of assembly, homodimer.

The enzyme catalyses (S)-4-amino-5-oxopentanoate + tRNA(Glu) + NADP(+) = L-glutamyl-tRNA(Glu) + NADPH + H(+). It functions in the pathway porphyrin-containing compound metabolism; protoporphyrin-IX biosynthesis; 5-aminolevulinate from L-glutamyl-tRNA(Glu): step 1/2. Catalyzes the NADPH-dependent reduction of glutamyl-tRNA(Glu) to glutamate 1-semialdehyde (GSA). This is Glutamyl-tRNA reductase from Stenotrophomonas maltophilia (strain K279a).